We begin with the raw amino-acid sequence, 397 residues long: Acetate kinase (397 aa).

Asn8 is a Mg(2+) binding site. Lys15 is a binding site for ATP. Arg89 lines the substrate pocket. Asp146 acts as the Proton donor/acceptor in catalysis. ATP is bound by residues 206–210 (HLGNG), 281–283 (DLR), and 329–333 (GIGEN). Glu382 is a Mg(2+) binding site.

This sequence belongs to the acetokinase family. As to quaternary structure, homodimer. Mg(2+) is required as a cofactor. Requires Mn(2+) as cofactor.

It localises to the cytoplasm. It carries out the reaction acetate + ATP = acetyl phosphate + ADP. It participates in metabolic intermediate biosynthesis; acetyl-CoA biosynthesis; acetyl-CoA from acetate: step 1/2. Functionally, catalyzes the formation of acetyl phosphate from acetate and ATP. Can also catalyze the reverse reaction. In Geobacillus sp. (strain WCH70), this protein is Acetate kinase.